The sequence spans 151 residues: Large ribosomal subunit protein uL15 (151 aa).

The interval 1–60 is disordered; that stretch reads MAENSPLKAHNLRPAPGAKTAKTRVGRGEASKGKTAGRGTKGTKARYQVPERFEGGQMPL.

It belongs to the universal ribosomal protein uL15 family. Part of the 50S ribosomal subunit.

Its function is as follows. Binds to the 23S rRNA. The polypeptide is Large ribosomal subunit protein uL15 (Streptomyces griseus subsp. griseus (strain JCM 4626 / CBS 651.72 / NBRC 13350 / KCC S-0626 / ISP 5235)).